The following is a 60-amino-acid chain: Stress response protein YkoL (60 aa).

The chain is Stress response protein YkoL (ykoL) from Bacillus subtilis (strain 168).